The sequence spans 654 residues: Bifunctional polymyxin resistance protein ArnA (654 aa).

The segment at 1-303 (MKVIVFAYHE…NISRIKGKKL (303 aa)) is formyltransferase ArnAFT. The active-site Proton donor; for formyltransferase activity is the H105. Residue 137-141 (TKKID) coordinates (6R)-10-formyltetrahydrofolate. The tract at residues 313–654 (NLKKILILGV…INFFINNNTS (342 aa)) is dehydrogenase ArnADH. NAD(+) contacts are provided by residues D346 and 367 to 368 (DI). UDP-alpha-D-glucuronate-binding positions include A392, Y397, and 431-432 (TS). The Proton acceptor; for decarboxylase activity role is filled by E433. UDP-alpha-D-glucuronate contacts are provided by residues R459, N491, 532–534 (QKR), and Y612. The active-site Proton donor; for decarboxylase activity is the R618.

This sequence in the N-terminal section; belongs to the Fmt family. UDP-L-Ara4N formyltransferase subfamily. The protein in the C-terminal section; belongs to the NAD(P)-dependent epimerase/dehydratase family. UDP-glucuronic acid decarboxylase subfamily. Homohexamer, formed by a dimer of trimers.

The enzyme catalyses UDP-alpha-D-glucuronate + NAD(+) = UDP-beta-L-threo-pentopyranos-4-ulose + CO2 + NADH. It carries out the reaction UDP-4-amino-4-deoxy-beta-L-arabinose + (6R)-10-formyltetrahydrofolate = UDP-4-deoxy-4-formamido-beta-L-arabinose + (6S)-5,6,7,8-tetrahydrofolate + H(+). Its pathway is nucleotide-sugar biosynthesis; UDP-4-deoxy-4-formamido-beta-L-arabinose biosynthesis; UDP-4-deoxy-4-formamido-beta-L-arabinose from UDP-alpha-D-glucuronate: step 1/3. The protein operates within nucleotide-sugar biosynthesis; UDP-4-deoxy-4-formamido-beta-L-arabinose biosynthesis; UDP-4-deoxy-4-formamido-beta-L-arabinose from UDP-alpha-D-glucuronate: step 3/3. It functions in the pathway bacterial outer membrane biogenesis; lipopolysaccharide biosynthesis. In terms of biological role, bifunctional enzyme that catalyzes the oxidative decarboxylation of UDP-glucuronic acid (UDP-GlcUA) to UDP-4-keto-arabinose (UDP-Ara4O) and the addition of a formyl group to UDP-4-amino-4-deoxy-L-arabinose (UDP-L-Ara4N) to form UDP-L-4-formamido-arabinose (UDP-L-Ara4FN). The modified arabinose is attached to lipid A and is required for resistance to polymyxin and cationic antimicrobial peptides. The polypeptide is Bifunctional polymyxin resistance protein ArnA (Wigglesworthia glossinidia brevipalpis).